A 259-amino-acid chain; its full sequence is Complement factor D (259 aa).

The N-terminal stretch at M1–A21 is a signal peptide. A propeptide spans Q22–R26 (activation peptide). The Peptidase S1 domain occupies I27–A254. A disulfide bond links C52 and C68. Active-site charge relay system residues include H67 and D115. Disulfide bonds link C149/C215, C180/C196, and C205/C230. Residue S209 is the Charge relay system of the active site. The interval T224–R228 is self-inhibitor loop.

Belongs to the peptidase S1 family. In terms of processing, CFD is activated by the removal of 5 residues at the N-terminus, named activation peptide, by the MASP-3 isoform of MASP1.

It is found in the secreted. The enzyme catalyses Selective cleavage of Arg-|-Lys bond in complement factor B when in complex with complement subcomponent C3b or with cobra venom factor.. Its activity is regulated as follows. Circulates in plasma in a mature but self-inhibited form. Activated by factor B (CFB), which displaces the self-inhibition loop. Associates with CFB complexed with complement C3b. Serine protease that initiates the alternative pathway of the complement system, a cascade of proteins that leads to phagocytosis and breakdown of pathogens and signaling that strengthens the adaptive immune system. In contrast to other complement pathways (classical, lectin and GZMK) that are directly activated by pathogens or antigen-antibody complexes, the alternative complement pathway is initiated by the spontaneous hydrolysis of complement C3. The alternative complement pathway acts as an amplification loop that enhances complement activation by mediating the formation of C3 and C5 convertases. Activated CFD cleaves factor B (CFB) when the latter is complexed with complement C3b, activating the C3 convertase of the alternative pathway. The protein is Complement factor D (CFD) of Bos taurus (Bovine).